Consider the following 193-residue polypeptide: Dephospho-CoA kinase (193 aa).

Residues 5-193 (IIGLTGGIAS…KKVERFCETI (189 aa)) enclose the DPCK domain. 13–18 (ASGKST) contributes to the ATP binding site.

It belongs to the CoaE family.

The protein resides in the cytoplasm. It catalyses the reaction 3'-dephospho-CoA + ATP = ADP + CoA + H(+). It functions in the pathway cofactor biosynthesis; coenzyme A biosynthesis; CoA from (R)-pantothenate: step 5/5. Its function is as follows. Catalyzes the phosphorylation of the 3'-hydroxyl group of dephosphocoenzyme A to form coenzyme A. This chain is Dephospho-CoA kinase, found in Fusobacterium nucleatum subsp. nucleatum (strain ATCC 25586 / DSM 15643 / BCRC 10681 / CIP 101130 / JCM 8532 / KCTC 2640 / LMG 13131 / VPI 4355).